The chain runs to 957 residues: Dystrophin-related protein 2 (957 aa).

2 Spectrin repeats span residues 102–179 and 231–337; these read DHSG…EELE and EHLL…QLQD. One can recognise a WW domain in the interval 358–383; that stretch reads WERAISPNKVPYYINHQAQTTCWDHP. A ZZ-type; degenerate zinc finger spans residues 605–661; sequence KHQTKCSICRQCPIKGFRYRSLKQFNVDICQTCFLTGKASKGNKLHYPIMEYYTPTT. The Zn(2+) site is built by C610, C613, C634, and C637. A Phosphoserine modification is found at S748. The segment covering 877–894 has biased composition (low complexity); sequence PPTESDGNGSAGSSLASS. Residues 877–923 form a disordered region; it reads PPTESDGNGSAGSSLASSPRQSEGSHPREKGQTTPDTEAADDVGSKS. Residue T910 is modified to Phosphothreonine.

Interacts with PRX; this enhances phosphorylation. Identified in a dystroglycan complex that contains at least PRX, DRP2, UTRN, DMD and DAG1. Detected in trigeminal nerve Schwann cells. Detected in brain cortex and hippocampus. Detected in brain membrane fractions and highly enriched in the postsynaptic density (at protein level).

It localises to the postsynaptic density. The protein localises to the cell projection. The protein resides in the dendrite. Its subcellular location is the perikaryon. It is found in the cell membrane. In terms of biological role, required for normal myelination and for normal organization of the cytoplasm and the formation of Cajal bands in myelinating Schwann cells. Required for normal PRX location at appositions between the abaxonal surface of the myelin sheath and the Schwann cell plasma membrane. Possibly involved in membrane-cytoskeleton interactions of the central nervous system. This Rattus norvegicus (Rat) protein is Dystrophin-related protein 2 (Drp2).